Here is a 180-residue protein sequence, read N- to C-terminus: uncharacterized protein (180 aa).

Helical transmembrane passes span 37–59 (VLHAAAAVTEYAFVLSTLVFPSF) and 128–147 (AGSATLFAGAAGAALRVLFV).

It localises to the cell membrane. This is an uncharacterized protein from Treponema pallidum (strain Nichols).